Here is a 388-residue protein sequence, read N- to C-terminus: Palmitoyltransferase ZDHHC18-B (388 aa).

Residues 1–33 form a disordered region; the sequence is MKNREYQQIDPQALATPTPTPPPRSLPEHKPRR. Residues 1–58 are Cytoplasmic-facing; it reads MKNREYQQIDPQALATPTPTPPPRSLPEHKPRRARRKWEVFPGKNRFYCDGRIIVARQ. Residues 59 to 79 traverse the membrane as a helical segment; sequence SGVLPLTLGLILLTSGLFFIF. At 80–87 the chain is on the lumenal side; that stretch reads DCPFLVKH. Residues 88-108 traverse the membrane as a helical segment; it reads LTSCIPAIGGVLFVFVIISLL. The Cytoplasmic portion of the chain corresponds to 109–205; it reads QTSFTDPGIL…GNCVGKRNYR (97 aa). The DHHC domain occupies 162-212; the sequence is KYCFTCKIFRPPRTSHCSLCDNCVERFDHHCPWVGNCVGKRNYRFFYTFIV. The active-site S-palmitoyl cysteine intermediate is Cys192. Residues 206 to 226 form a helical membrane-spanning segment; it reads FFYTFIVSLSFLTAFIFGCVT. Over 227 to 253 the chain is Lumenal; the sequence is THLALRSQGGNGLVNALQSSPASALEL. A helical transmembrane segment spans residues 254–274; the sequence is VVCFFSVWSILGLSGFHTYLV. The Cytoplasmic portion of the chain corresponds to 275–388; it reads AANLTTNEDI…AISMQNHSTA (114 aa).

It belongs to the DHHC palmitoyltransferase family. ERF2/ZDHHC9 subfamily.

It is found in the golgi apparatus membrane. It catalyses the reaction L-cysteinyl-[protein] + hexadecanoyl-CoA = S-hexadecanoyl-L-cysteinyl-[protein] + CoA. In terms of biological role, palmitoyltransferase that catalyzes the addition of palmitate onto various protein substrates, such as CGAS, HRAS and LCK. The protein is Palmitoyltransferase ZDHHC18-B of Danio rerio (Zebrafish).